Consider the following 84-residue polypeptide: MKPGIHPDYHPVVFQDASTGTTFLTRSTLTSDRTAVWEDGNTYPLVVVDVTSESHPFWTGAQRVMDTAGRVEKFERRYGVRKRP.

The protein belongs to the bacterial ribosomal protein bL31 family. Type B subfamily. Part of the 50S ribosomal subunit.

The polypeptide is Large ribosomal subunit protein bL31B (Rhodococcus opacus (strain B4)).